The primary structure comprises 98 residues: MAVAYYCLSLFLLSTWVALLLQPLQGAWGAPLEPMYPGDYATHEQRAQYETQLRRYINTLTRPRYGKRDEDTAGLPGRQLPPCTSLLVGLMPCAAARS.

The first 29 residues, 1 to 29 (MAVAYYCLSLFLLSTWVALLLQPLQGAWG), serve as a signal peptide directing secretion. Tyr65 carries the post-translational modification Tyrosine amide.

This sequence belongs to the NPY family. In terms of processing, no icosapeptide-like peptide is cleaved from the C-terminal.

It is found in the secreted. Functionally, hormone secreted by pancreatic cells that acts as a regulator of pancreatic and gastrointestinal functions probably by signaling through the G protein-coupled receptor NPY4R2. This is Pancreatic polypeptide prohormone (Ppy) from Rattus norvegicus (Rat).